We begin with the raw amino-acid sequence, 468 residues long: Ribosomal protein uS12 methylthiotransferase RimO (468 aa).

The 115-residue stretch at 16 to 130 (NKIHFISLGC…ILSAIESRES (115 aa)) folds into the MTTase N-terminal domain. Residues Cys25, Cys61, Cys93, Cys164, Cys168, and Cys171 each coordinate [4Fe-4S] cluster. A Radical SAM core domain is found at 150 to 382 (STPKHYAYLK…SQIQKRNVDK (233 aa)). Residues 385–455 (QKLIGEKIEA…GYDLVGRVVK (71 aa)) form the TRAM domain.

This sequence belongs to the methylthiotransferase family. RimO subfamily. The cofactor is [4Fe-4S] cluster.

Its subcellular location is the cytoplasm. The catalysed reaction is L-aspartate(89)-[ribosomal protein uS12]-hydrogen + (sulfur carrier)-SH + AH2 + 2 S-adenosyl-L-methionine = 3-methylsulfanyl-L-aspartate(89)-[ribosomal protein uS12]-hydrogen + (sulfur carrier)-H + 5'-deoxyadenosine + L-methionine + A + S-adenosyl-L-homocysteine + 2 H(+). Its function is as follows. Catalyzes the methylthiolation of an aspartic acid residue of ribosomal protein uS12. The sequence is that of Ribosomal protein uS12 methylthiotransferase RimO from Chlamydia pneumoniae (Chlamydophila pneumoniae).